A 467-amino-acid polypeptide reads, in one-letter code: Translation initiation factor eIF2B subunit delta (467 aa).

The segment at 1–106 is disordered; the sequence is MGFSAEQAKK…QNPQNSPETD (106 aa). Phosphoserine is present on residues S16, S19, S21, and S23. Polar residues predominate over residues 16 to 37; sequence SPVSESSSVGGTSPATASSVVS. The residue at position 27 (T27) is a Phosphothreonine. Residues S28 and S37 each carry the phosphoserine modification. Positions 51-61 are enriched in basic residues; that stretch reads LKKARKQASRR. Over residues 84–102 the composition is skewed to low complexity; that stretch reads PNKNSNQQKKASKQNPQNS.

Belongs to the eIF-2B alpha/beta/delta subunits family. In terms of assembly, component of the translation initiation factor 2B (eIF2B) complex which is a heterodecamer of two sets of five different subunits: alpha, beta, gamma, delta and epsilon. Subunits alpha, beta and delta comprise a regulatory subcomplex and subunits epsilon and gamma comprise a catalytic subcomplex. Within the complex, the hexameric regulatory complex resides at the center, with the two heterodimeric catalytic subcomplexes bound on opposite sides.

Its subcellular location is the cytoplasm. The protein resides in the cytosol. Acts as a component of the translation initiation factor 2B (eIF2B) complex, which catalyzes the exchange of GDP for GTP on the eukaryotic initiation factor 2 (eIF2) complex gamma subunit. Its guanine nucleotide exchange factor activity is repressed when bound to eIF2 complex phosphorylated on the alpha subunit, thereby limiting the amount of methionyl-initiator methionine tRNA available to the ribosome and consequently global translation is repressed. This is Translation initiation factor eIF2B subunit delta (tif224) from Schizosaccharomyces pombe (strain 972 / ATCC 24843) (Fission yeast).